Consider the following 365-residue polypeptide: S-adenosylmethionine:tRNA ribosyltransferase-isomerase (365 aa).

It belongs to the QueA family. Monomer.

The protein localises to the cytoplasm. It catalyses the reaction 7-aminomethyl-7-carbaguanosine(34) in tRNA + S-adenosyl-L-methionine = epoxyqueuosine(34) in tRNA + adenine + L-methionine + 2 H(+). Its pathway is tRNA modification; tRNA-queuosine biosynthesis. In terms of biological role, transfers and isomerizes the ribose moiety from AdoMet to the 7-aminomethyl group of 7-deazaguanine (preQ1-tRNA) to give epoxyqueuosine (oQ-tRNA). The protein is S-adenosylmethionine:tRNA ribosyltransferase-isomerase of Rickettsia africae (strain ESF-5).